The following is a 349-amino-acid chain: Very-long-chain 3-oxoacyl-CoA reductase (349 aa).

Residues 29–49 (AASLVFATGGLFLLSRGLSFL) traverse the membrane as a helical segment. Positions 74, 129, 137, 156, 223, 227, 256, and 258 each coordinate NADP(+). The active-site Proton donor is the Y223. The active-site Lowers pKa of active site Tyr is K227.

It belongs to the short-chain dehydrogenases/reductases (SDR) family.

Its subcellular location is the endoplasmic reticulum membrane. It catalyses the reaction a very-long-chain (3R)-3-hydroxyacyl-CoA + NADP(+) = a very-long-chain 3-oxoacyl-CoA + NADPH + H(+). It functions in the pathway lipid metabolism; fatty acid biosynthesis. Functionally, component of the microsomal membrane bound fatty acid elongation system, which produces the 26-carbon very long-chain fatty acids (VLCFA) from palmitate. Catalyzes the reduction of the 3-ketoacyl-CoA intermediate that is formed in each cycle of fatty acid elongation. VLCFAs serve as precursors for ceramide and sphingolipids. This chain is Very-long-chain 3-oxoacyl-CoA reductase, found in Coccidioides immitis (strain RS) (Valley fever fungus).